A 205-amino-acid chain; its full sequence is FAS-associated death domain protein (205 aa).

Residues 3 to 81 (PFLVLLHSLS…RHDLLQRLDD (79 aa)) form the DED domain. Residues 97–181 (LQVAFDIVCD…LVADLVEEAQ (85 aa)) form the Death domain. The interval 181 to 205 (QESVSKSENMSPVLRDSTVSSSETP) is disordered. S191 is modified (phosphoserine).

Can self-associate. Component of the AIM2 PANoptosome complex, a multiprotein complex that drives inflammatory cell death (PANoptosis). Component of the death-induced signaling complex (DISC) composed of cell surface receptor FAS/CD95 or TNFRSF1A, adapter protein FADD and the CASP8 protease; recruitment of CASP8 to the complex is required for processing of CASP8 into the p18 and p10 subunits. Interacts (via death domain) with FAS (via death domain). Interacts directly (via DED domain) with NOL3 (via CARD domain); inhibits death-inducing signaling complex (DISC) assembly by inhibiting the increase in FAS-FADD binding induced by FAS activation. Interacts with CFLAR, PEA15 and MBD4. When phosphorylated, part of a complex containing HIPK3 and FAS. May interact with MAVS/IPS1. Interacts with MOCV v-CFLAR protein and PIDD1. Interacts with RIPK1 and TRADD. Interacts with stimulated TNFRSF10B. Interacts with DDX24.

Its subcellular location is the cytoplasm. Apoptotic adapter molecule that recruits caspases CASP8 or CASP10 to the activated FAS/CD95 or TNFRSF1A/TNFR-1 receptors. The resulting aggregate called the death-inducing signaling complex (DISC) performs CASP8 proteolytic activation. Active CASP8 initiates the subsequent cascade of caspases mediating apoptosis. Involved in interferon-mediated antiviral immune response, playing a role in the positive regulation of interferon signaling. In Mus musculus (Mouse), this protein is FAS-associated death domain protein.